Here is a 443-residue protein sequence, read N- to C-terminus: MQRRDDPAARMSRSSGRSGSMDPSGAHPSVRQTPSRQPPLPHRSRGGGGGSRGGARASPATQPPPLLPPSATGPDATVGGPAPTPLLPPSATASVKMEPENKYLPELMAEKDSLDPSFTHAMQLLTAEIEKIQKGDSKKDDEENYLDLFSHKNMKLKERVLIPVKQYPKFNFVGKILGPQGNTIKRLQEETGAKISVLGKGSMRDKAKEEELRKGGDPKYAHLNMDLHVFIEVFGPPCEAYALMAHAMEEVKKFLVPDMMDDICQEQFLELSYLNGVPEPSRGRGVPVRGRGAAPPPPPVPRGRGVGPPRGALVRGTPVRGAITRGATVTRGVPPPPTVRGAPAPRARTAGIQRIPLPPPPAPETYEEYGYDDTYAEQSYEGYEGYYSQSQGDSEYYDYGHGEVQDSYEAYGQDDWNGTRPSLKAPPARPVKGAYREHPYGRY.

The segment at 1–96 (MQRRDDPAAR…LPPSATASVK (96 aa)) is disordered. Residues 10–21 (RMSRSSGRSGSM) are compositionally biased toward low complexity. Phosphoserine occurs at positions 18, 20, and 29. At threonine 33 the chain carries Phosphothreonine. Arginine 45 carries the asymmetric dimethylarginine; by PRMT1 modification. At arginine 52 the chain carries Asymmetric dimethylarginine; partial; by PRMT1. At serine 58 the chain carries Phosphoserine. Threonine 84 bears the Phosphothreonine; by MAPK1 mark. Glycyl lysine isopeptide (Lys-Gly) (interchain with G-Cter in SUMO2) cross-links involve residues lysine 96 and lysine 102. The tract at residues 100–260 (ENKYLPELMA…VKKFLVPDMM (161 aa)) is involved in homodimerization. A Phosphoserine modification is found at serine 113. Lysine 139 participates in a covalent cross-link: Glycyl lysine isopeptide (Lys-Gly) (interchain with G-Cter in SUMO2). Residue serine 150 is modified to Phosphoserine. The 27-residue stretch at 171 to 197 (NFVGKILGPQGNTIKRLQEETGAKISV) folds into the KH domain. An N6-acetyllysine; alternate modification is found at lysine 175. A Glycyl lysine isopeptide (Lys-Gly) (interchain with G-Cter in SUMO2); alternate cross-link involves residue lysine 175. Phosphothreonine is present on threonine 183. The span at 280–293 (PSRGRGVPVRGRGA) shows a compositional bias: low complexity. A disordered region spans residues 280–316 (PSRGRGVPVRGRGAAPPPPPVPRGRGVGPPRGALVRG). Arginine 282, arginine 284, and arginine 291 each carry omega-N-methylarginine. Arginine 304 carries the post-translational modification Asymmetric dimethylarginine; by PRMT1. Over residues 307–316 (GPPRGALVRG) the composition is skewed to low complexity. 4 positions are modified to omega-N-methylarginine; by PRMT1: arginine 310, arginine 315, arginine 320, and arginine 325. Arginine 320 carries the post-translational modification Dimethylated arginine; in A2780 ovarian carcinoma cell line. A disordered region spans residues 327–346 (ATVTRGVPPPPTVRGAPAPR). Dimethylated arginine; in A2780 ovarian carcinoma cell line occurs at positions 331 and 340. The residue at position 331 (arginine 331) is an Asymmetric dimethylarginine; alternate. Arginine 331 carries the omega-N-methylarginine; by PRMT1; alternate modification. Position 340 is an omega-N-methylarginine; by PRMT1 (arginine 340). Residues 351–443 (GIQRIPLPPP…AYREHPYGRY (93 aa)) are interaction with HNRNPA1. Residue tyrosine 387 is modified to Phosphotyrosine. Position 390 is a phosphoserine (serine 390). An interaction with ZBTB7A region spans residues 400–420 (GHGEVQDSYEAYGQDDWNGTR). Residues 411–443 (YGQDDWNGTRPSLKAPPARPVKGAYREHPYGRY) form a disordered region. A Glycyl lysine isopeptide (Lys-Gly) (interchain with G-Cter in SUMO2) cross-link involves residue lysine 432. Basic and acidic residues predominate over residues 434–443 (AYREHPYGRY). A phosphotyrosine; by PTK6 mark is found at tyrosine 435, tyrosine 440, and tyrosine 443.

This sequence belongs to the KHDRBS family. Self-associates to form homooligomers when bound to RNA, oligomerization appears to be limited when binding to proteins; dimerization increases RNA affinity. Forms a trimeric complex in the nucleus consisting of BANP, HDAC6 and KHDRBS1/SAM68; HDAC6 keeps KHDRBS1 in a deacetylated state which inhibits the inclusion of CD44 alternate exons. The complex is disrupted by MAPK1/MAPK3-mediated phosphorylation of BANP which results in BANP export to the cytoplasm. This facilitates acetylation of KHDRBS1 and CD44 variant exon inclusion. Interacts with KHDRBS3/SLIM-2. Interacts with KHDRBS2/SLIM-1; heterooligomer formation of KHDRBS family proteins may modulate RNA substrate specificity. Interacts with RASA1, LCK, FYN, PTPN6, PLCG1, GRB2, CBL, JAK3, PIK3R, STAT3, APC, HNRNPA1. Interacts with PTK6 (via SH3 and SH2 domains). Forms a complex with ILF2, ILF3, YLPM1, RBMX, NCOA5 and PPP1CA. Does not interact with TPR. Interacts with PRMT1. Binds WBP4/FBP21 (via WW domains), FNBP4/FBP30 (via WW domains). Interacts (via Arg/Gly-rich-flanked Pro-rich regions) with FYN (via the SH3 domain). Interacts with the non-receptor tyrosine kinase SRMS; the interaction leads to phosphorylation of KHDRBS1. Interacts with ZBTB7A; negatively regulates KHDRBS1 splicing activity toward BCL2L1. In terms of processing, tyrosine phosphorylated by several non-receptor tyrosine kinases including LCK, FYN and JAK3. Also tyrosine phosphorylated by the non-receptor tyrosine kinase SRMS in an EGF-dependent manner. Negatively correlates with ability to bind RNA but required for many interactions with proteins. Phosphorylation by PTK6 negatively regulates its RNA binding ability. Phosphorylation by PTK6 at Tyr-440 dictates the nuclear localization of KHDRBS1. Phosphorylation at Tyr-387 disrupts interaction with APC. Phosphorylation at tyrosine residues by FYN inverts activity on modulation of BCL2L1 alternative splicing. Post-translationally, acetylated. Positively correlates with ability to bind RNA. Deacetylated by HDAC6; this regulates alternative splicing by inhibiting the inclusion of CD44 alternate exons. Arginine methylation is required for nuclear localization. Also can affect interaction with other proteins. Inhibits interaction with Src-like SH3 domains, but not interaction with WW domains of WBP4/FBP21 and FNBP4/FBP30. Ubiquitously expressed in all tissue examined. Isoform 1 is expressed at lower levels in brain, skeletal muscle, and liver whereas isoform 3 is intensified in skeletal muscle and in liver.

Its subcellular location is the nucleus. It is found in the cytoplasm. The protein localises to the membrane. Functionally, recruited and tyrosine phosphorylated by several receptor systems, for example the T-cell, leptin and insulin receptors. Once phosphorylated, functions as an adapter protein in signal transduction cascades by binding to SH2 and SH3 domain-containing proteins. Role in G2-M progression in the cell cycle. Represses CBP-dependent transcriptional activation apparently by competing with other nuclear factors for binding to CBP. Also acts as a putative regulator of mRNA stability and/or translation rates and mediates mRNA nuclear export. Positively regulates the association of constitutive transport element (CTE)-containing mRNA with large polyribosomes and translation initiation. According to some authors, is not involved in the nucleocytoplasmic export of unspliced (CTE)-containing RNA species according to. RNA-binding protein that plays a role in the regulation of alternative splicing and influences mRNA splice site selection and exon inclusion. Binds to RNA containing 5'-[AU]UAA-3' as a bipartite motif spaced by more than 15 nucleotides. Binds poly(A). Can regulate CD44 alternative splicing in a Ras pathway-dependent manner. In cooperation with HNRNPA1 modulates alternative splicing of BCL2L1 by promoting splicing toward isoform Bcl-X(S), and of SMN1. Can regulate alternative splicing of NRXN1 and NRXN3 in the laminin G-like domain 6 containing the evolutionary conserved neurexin alternative spliced segment 4 (AS4) involved in neurexin selective targeting to postsynaptic partners. In a neuronal activity-dependent manner cooperates synergistically with KHDRBS2/SLIM-1 in regulation of NRXN1 exon skipping at AS4. The cooperation with KHDRBS2/SLIM-1 is antagonistic for regulation of NXRN3 alternative splicing at AS4. In terms of biological role, isoform 3, which is expressed in growth-arrested cells only, inhibits S phase. This chain is KH domain-containing, RNA-binding, signal transduction-associated protein 1, found in Homo sapiens (Human).